Here is a 165-residue protein sequence, read N- to C-terminus: Protein NKG7 (165 aa).

Helical transmembrane passes span 9–29, 61–81, 92–112, and 133–153; these read LFAG…DFWI, FCIL…LSCI, LVST…MAVY, and FYLG…SLGA.

This sequence belongs to the PMP-22/EMP/MP20 family. As to expression, predominantly expressed by leukocytes with cytotoxic activity such as CD8(+) T-cells and natural killer cells.

It localises to the cell membrane. The protein localises to the cytolytic granule membrane. In terms of biological role, regulates cytotoxic granule exocytosis in effector lymphocytes, thus acting as a critical mediator of inflammation in a broad range of infectious and non-infectious diseases. Essential for cytotoxic degranulation of natural killer (NK) cells and CD8(+) T-cells and for the activation of CD4(+) T-cells following infection. Plays a critical role in CD8(+) T-cell and NK cell-mediated cytolysis of target cells and contributes to the cytolytic activity via the perforin/granzyme pathway by enhancing exocytosis of LAMP1-carrying lytic granules. Contributes to NK cell-mediated control of cancer metastasis. The polypeptide is Protein NKG7 (Nkg7) (Mus musculus (Mouse)).